Consider the following 315-residue polypeptide: Methionyl-tRNA formyltransferase (315 aa).

113-116 (SLLP) contacts (6S)-5,6,7,8-tetrahydrofolate.

Belongs to the Fmt family.

The enzyme catalyses L-methionyl-tRNA(fMet) + (6R)-10-formyltetrahydrofolate = N-formyl-L-methionyl-tRNA(fMet) + (6S)-5,6,7,8-tetrahydrofolate + H(+). Functionally, attaches a formyl group to the free amino group of methionyl-tRNA(fMet). The formyl group appears to play a dual role in the initiator identity of N-formylmethionyl-tRNA by promoting its recognition by IF2 and preventing the misappropriation of this tRNA by the elongation apparatus. This Klebsiella pneumoniae (strain 342) protein is Methionyl-tRNA formyltransferase.